A 264-amino-acid polypeptide reads, in one-letter code: Thymidylate synthase (264 aa).

Position 21 (arginine 21) interacts with dUMP. Histidine 51 lines the (6R)-5,10-methylene-5,6,7,8-tetrahydrofolate pocket. 126–127 (RR) lines the dUMP pocket. Cysteine 146 functions as the Nucleophile in the catalytic mechanism. Residues 166–169 (RSAD), asparagine 177, and 207–209 (HIY) contribute to the dUMP site. Aspartate 169 contacts (6R)-5,10-methylene-5,6,7,8-tetrahydrofolate. Serine 263 provides a ligand contact to (6R)-5,10-methylene-5,6,7,8-tetrahydrofolate.

This sequence belongs to the thymidylate synthase family. Bacterial-type ThyA subfamily. In terms of assembly, homodimer.

The protein localises to the cytoplasm. The catalysed reaction is dUMP + (6R)-5,10-methylene-5,6,7,8-tetrahydrofolate = 7,8-dihydrofolate + dTMP. The protein operates within pyrimidine metabolism; dTTP biosynthesis. Catalyzes the reductive methylation of 2'-deoxyuridine-5'-monophosphate (dUMP) to 2'-deoxythymidine-5'-monophosphate (dTMP) while utilizing 5,10-methylenetetrahydrofolate (mTHF) as the methyl donor and reductant in the reaction, yielding dihydrofolate (DHF) as a by-product. This enzymatic reaction provides an intracellular de novo source of dTMP, an essential precursor for DNA biosynthesis. The sequence is that of Thymidylate synthase from Halalkalibacterium halodurans (strain ATCC BAA-125 / DSM 18197 / FERM 7344 / JCM 9153 / C-125) (Bacillus halodurans).